A 260-amino-acid polypeptide reads, in one-letter code: Achaete-scute homolog 2 (260 aa).

Disordered stretches follow at residues 85 to 126 (AGAC…RNER) and 191 to 239 (PATR…EDSS). Low complexity-rich tracts occupy residues 110 to 121 (ATEASSSSAAVA) and 200 to 218 (TQPSASPASASLSCTSTSP). In terms of domain architecture, bHLH spans 118 to 170 (AAVARRNERERNRVKLVNLGFQALRQHVPHGGANKKLSKVETLRSAVEYIRAL).

As to quaternary structure, efficient DNA binding requires dimerization with another bHLH protein. Forms heterodimers with bHLH transcription factor TCF3. May not heterodimerise with bHLH protein HAND1. In terms of tissue distribution, expressed in Schwann cells in the peripheral nerve (at protein level). Also expressed by endothelial cells (at protein level). May be expressed in neuronal precursor cells.

Its subcellular location is the nucleus. It localises to the cytoplasm. Functionally, transcription factor. Binds to E-box motifs 5'-CANNTG-3' in the regulatory elements of target genes, probably as a heterodimer with another basic helix-loop-helix (bHLH) protein such as the transcription factor TCF3. May bind both open and closed chromatin, acting as a pioneer transcription factor to allow other factors to bind and activate lineage-specific genes. Required during post-implantation development for the generation of some differentiated trophoblast cell types. Transcriptional activity of ASCL2 may be antagonised in a subset of trophoblast cells by bHLH transcription factor HAND1, perhaps by competing for dimerization with other bHLH proteins. Involved in differentiation and function of follicular T-helper (Tfh) cells, thereby playing a role in germinal center responses; probably modulates expression of genes involved in Tfh cell function, such as BCL6. May also act as a suppressor of Th1-, Th2- and Th17-cell differentiation. Induces the formation of stem cells in intestinal crypts in vitro, synergistically activating transcription of target genes, such as SOX9, together with TCF4/beta-catenin. May form a bistable transcriptional switch, controlling expression of its own gene together with Wnt/R-spondin signaling, and thereby maintaining stem cell characteristics. Modulates expression of target genes, including perhaps down-regulating EGR1/Krox24 and chemokine CXCL10/Mob-1 and up-regulating CXCR4 and CDKN1C/p57kip2, in Schwann cells. May play a role in reducing proliferation of Schwann cells, perhaps acting via modulation of expression of CDKN1C. May be dispensable for blastocyst formation and later embryonic function. May be involved in the determination of neuronal precursors. This chain is Achaete-scute homolog 2 (Ascl2), found in Rattus norvegicus (Rat).